Consider the following 373-residue polypeptide: UDP-N-acetylglucosamine--N-acetylmuramyl-(pentapeptide) pyrophosphoryl-undecaprenol N-acetylglucosamine transferase (373 aa).

Residues 15–17, Asn-126, Arg-170, Ser-198, and Gln-300 contribute to the UDP-N-acetyl-alpha-D-glucosamine site; that span reads TGG.

It belongs to the glycosyltransferase 28 family. MurG subfamily.

The protein resides in the cell inner membrane. It carries out the reaction di-trans,octa-cis-undecaprenyl diphospho-N-acetyl-alpha-D-muramoyl-L-alanyl-D-glutamyl-meso-2,6-diaminopimeloyl-D-alanyl-D-alanine + UDP-N-acetyl-alpha-D-glucosamine = di-trans,octa-cis-undecaprenyl diphospho-[N-acetyl-alpha-D-glucosaminyl-(1-&gt;4)]-N-acetyl-alpha-D-muramoyl-L-alanyl-D-glutamyl-meso-2,6-diaminopimeloyl-D-alanyl-D-alanine + UDP + H(+). It functions in the pathway cell wall biogenesis; peptidoglycan biosynthesis. Functionally, cell wall formation. Catalyzes the transfer of a GlcNAc subunit on undecaprenyl-pyrophosphoryl-MurNAc-pentapeptide (lipid intermediate I) to form undecaprenyl-pyrophosphoryl-MurNAc-(pentapeptide)GlcNAc (lipid intermediate II). This is UDP-N-acetylglucosamine--N-acetylmuramyl-(pentapeptide) pyrophosphoryl-undecaprenol N-acetylglucosamine transferase from Methylobacterium nodulans (strain LMG 21967 / CNCM I-2342 / ORS 2060).